Reading from the N-terminus, the 540-residue chain is 2,3-bisphosphoglycerate-independent phosphoglycerate mutase (540 aa).

2 residues coordinate Mn(2+): D24 and S74. The active-site Phosphoserine intermediate is S74. Residues H135, 165–166 (RD), R197, R203, 268–271 (RPDR), and K341 contribute to the substrate site. The Mn(2+) site is built by D408, H412, D449, H450, and H467.

The protein belongs to the BPG-independent phosphoglycerate mutase family. As to quaternary structure, monomer. Mn(2+) serves as cofactor.

It carries out the reaction (2R)-2-phosphoglycerate = (2R)-3-phosphoglycerate. The protein operates within carbohydrate degradation; glycolysis; pyruvate from D-glyceraldehyde 3-phosphate: step 3/5. Its function is as follows. Catalyzes the interconversion of 2-phosphoglycerate and 3-phosphoglycerate. The chain is 2,3-bisphosphoglycerate-independent phosphoglycerate mutase from Prochlorococcus marinus (strain SARG / CCMP1375 / SS120).